The chain runs to 1091 residues: ATP-dependent helicase/deoxyribonuclease subunit B (1091 aa).

This sequence belongs to the helicase family. AddB/RexB type 2 subfamily. In terms of assembly, heterodimer of AddA and RexB. Requires Mg(2+) as cofactor.

Its function is as follows. The heterodimer acts as both an ATP-dependent DNA helicase and an ATP-dependent, dual-direction single-stranded exonuclease. Recognizes the chi site generating a DNA molecule suitable for the initiation of homologous recombination. This subunit has 5' -&gt; 3' nuclease activity but not helicase activity. The chain is ATP-dependent helicase/deoxyribonuclease subunit B from Streptococcus pneumoniae (strain ATCC 700669 / Spain 23F-1).